We begin with the raw amino-acid sequence, 247 residues long: Dof zinc finger protein DOF3.5 (247 aa).

Residues 25-79 form a Dof-type zinc finger; that stretch reads PSCPRCGSSNTKFCYYNNYSLTQPRYFCKGCRRYWTKGGSLRNVPVGGGCRKSRR. Residues cysteine 27, cysteine 30, cysteine 52, and cysteine 55 each contribute to the Zn(2+) site. The tract at residues 70–100 is disordered; it reads VGGGCRKSRRPKSSSGNNTKTSLTANSGNPG. Residues 82-94 show a composition bias toward polar residues; sequence SSSGNNTKTSLTA.

It is found in the nucleus. Transcription factor that binds specifically to a 5'-AA[AG]G-3' consensus core sequence. This chain is Dof zinc finger protein DOF3.5 (DOF3.5), found in Arabidopsis thaliana (Mouse-ear cress).